The following is a 160-amino-acid chain: SsrA-binding protein (160 aa).

The disordered stretch occupies residues 131–160; the sequence is KKEYDKRHTERERDSDRELQRAVRTKGKDD.

This sequence belongs to the SmpB family.

The protein resides in the cytoplasm. In terms of biological role, required for rescue of stalled ribosomes mediated by trans-translation. Binds to transfer-messenger RNA (tmRNA), required for stable association of tmRNA with ribosomes. tmRNA and SmpB together mimic tRNA shape, replacing the anticodon stem-loop with SmpB. tmRNA is encoded by the ssrA gene; the 2 termini fold to resemble tRNA(Ala) and it encodes a 'tag peptide', a short internal open reading frame. During trans-translation Ala-aminoacylated tmRNA acts like a tRNA, entering the A-site of stalled ribosomes, displacing the stalled mRNA. The ribosome then switches to translate the ORF on the tmRNA; the nascent peptide is terminated with the 'tag peptide' encoded by the tmRNA and targeted for degradation. The ribosome is freed to recommence translation, which seems to be the essential function of trans-translation. This is SsrA-binding protein from Pseudomonas syringae pv. tomato (strain ATCC BAA-871 / DC3000).